The chain runs to 354 residues: UPF0597 protein PPA0217 (354 aa).

This sequence belongs to the UPF0597 family.

In Cutibacterium acnes (strain DSM 16379 / KPA171202) (Propionibacterium acnes), this protein is UPF0597 protein PPA0217.